We begin with the raw amino-acid sequence, 496 residues long: Amino-acid acetyltransferase, mitochondrial (496 aa).

In terms of domain architecture, N-acetyltransferase spans Tyr-333–Thr-493.

Belongs to the acetyltransferase family.

It is found in the mitochondrion. It carries out the reaction L-glutamate + acetyl-CoA = N-acetyl-L-glutamate + CoA + H(+). It participates in amino-acid biosynthesis; L-arginine biosynthesis; N(2)-acetyl-L-ornithine from L-glutamate: step 1/4. Functionally, N-acetylglutamate synthase involved in arginine biosynthesis. This chain is Amino-acid acetyltransferase, mitochondrial (arg2), found in Schizosaccharomyces japonicus (strain yFS275 / FY16936) (Fission yeast).